The following is a 141-amino-acid chain: uncharacterized protein (141 aa).

One can recognise a MaoC-like domain in the interval 8–112 (IGQVFKTKSL…VLDKQPKRNE (105 aa)).

This is an uncharacterized protein from Bacillus subtilis (strain 168).